The sequence spans 492 residues: Cytochrome P450 2A12 (492 aa).

Cys-437 contributes to the heme binding site.

It belongs to the cytochrome P450 family. It depends on heme as a cofactor. As to expression, liver.

Its subcellular location is the endoplasmic reticulum membrane. It localises to the microsome membrane. The enzyme catalyses an organic molecule + reduced [NADPH--hemoprotein reductase] + O2 = an alcohol + oxidized [NADPH--hemoprotein reductase] + H2O + H(+). Highly active in the 7-alpha-hydroxylation of testosterone. The polypeptide is Cytochrome P450 2A12 (Cyp2a12) (Mus musculus (Mouse)).